Consider the following 69-residue polypeptide: MKTQFAILMIAVVLMQMLVQTEGGILGKIWEGVKSLIGKRGLKKLDQLDDTFDSDLSDADVKLLREMFK.

An N-terminal signal peptide occupies residues 1–23 (MKTQFAILMIAVVLMQMLVQTEG). Isoleucine 37 carries the isoleucine amide modification. A propeptide spanning residues 41 to 69 (GLKKLDQLDDTFDSDLSDADVKLLREMFK) is cleaved from the precursor.

The protein belongs to the non-disulfide-bridged peptide (NDBP) superfamily. Short antimicrobial peptide (group 4) family. As to expression, expressed by the venom gland.

It is found in the secreted. It localises to the target cell membrane. Its function is as follows. Amphipathic peptide with antimicrobial activity. Shows antifungal activity with MIC values ranging from 25 to 200 uM. Does not show antifungal activity against Candida glabrata (ATCC90030) and Candida parapsilosis (ATCC22019) (MIC&gt;400 uM). The sequence is that of Amphipathic peptide OcyC2 from Opisthacanthus cayaporum (South American scorpion).